Consider the following 152-residue polypeptide: Transcriptional regulator MraZ (152 aa).

SpoVT-AbrB domains are found at residues 5–52 and 81–124; these read ATLV…PLPE and ASEC…DETT.

The protein belongs to the MraZ family. As to quaternary structure, forms oligomers.

Its subcellular location is the cytoplasm. It localises to the nucleoid. Negatively regulates its own expression and that of the subsequent genes in the proximal part of the division and cell wall (dcw) gene cluster. Acts by binding directly to DNA. May also regulate the expression of genes outside the dcw cluster. In Escherichia fergusonii (strain ATCC 35469 / DSM 13698 / CCUG 18766 / IAM 14443 / JCM 21226 / LMG 7866 / NBRC 102419 / NCTC 12128 / CDC 0568-73), this protein is Transcriptional regulator MraZ.